The chain runs to 733 residues: Polyribonucleotide nucleotidyltransferase (733 aa).

Residues Asp-503 and Asp-509 each contribute to the Mg(2+) site. One can recognise a KH domain in the interval Pro-570–Ile-629. In terms of domain architecture, S1 motif spans Gly-639–Lys-713.

It belongs to the polyribonucleotide nucleotidyltransferase family. The cofactor is Mg(2+).

It is found in the cytoplasm. The catalysed reaction is RNA(n+1) + phosphate = RNA(n) + a ribonucleoside 5'-diphosphate. Functionally, involved in mRNA degradation. Catalyzes the phosphorolysis of single-stranded polyribonucleotides processively in the 3'- to 5'-direction. The polypeptide is Polyribonucleotide nucleotidyltransferase (Chlorobaculum tepidum (strain ATCC 49652 / DSM 12025 / NBRC 103806 / TLS) (Chlorobium tepidum)).